The primary structure comprises 226 residues: UPF0758 protein PsycPRwf_0491 (226 aa).

The 123-residue stretch at 102-224 (SLNRSQVVKD…TLSFAETATA (123 aa)) folds into the MPN domain. 3 residues coordinate Zn(2+): His-173, His-175, and Asp-186. Positions 173–186 (HNHPNQDATPSAAD) match the JAMM motif motif.

This sequence belongs to the UPF0758 family.

The protein is UPF0758 protein PsycPRwf_0491 of Psychrobacter sp. (strain PRwf-1).